The chain runs to 444 residues: Presenilin sel-12 (444 aa).

Topologically, residues methionine 1–tyrosine 45 are cytoplasmic. The chain crosses the membrane as a helical span at residues glycine 46–phenylalanine 66. The Lumenal segment spans residues threonine 67–serine 101. The helical transmembrane segment at leucine 102 to phenylalanine 122 threads the bilayer. Residues tyrosine 123–leucine 130 are Cytoplasmic-facing. Residues isoleucine 131–valine 151 form a helical membrane-spanning segment. The Lumenal portion of the chain corresponds to glutamine 152 to serine 163. The helical transmembrane segment at alanine 164–tryptophan 184 threads the bilayer. The Cytoplasmic segment spans residues lysine 185–arginine 189. A helical membrane pass occupies residues leucine 190 to leucine 210. The Lumenal segment spans residues proline 211–glutamate 212. The chain crosses the membrane as a helical span at residues tryptophan 213 to proline 233. Aspartate 226 is a catalytic residue. Residues lysine 234–lysine 359 are Cytoplasmic-facing. Positions threonine 275 to arginine 331 are disordered. Polar residues-rich tracts occupy residues serine 282–glutamate 300 and glutamine 315–glycine 329. The helical transmembrane segment at leucine 360–aspartate 380 threads the bilayer. The active site involves aspartate 364. The Lumenal segment spans residues tryptophan 381 to threonine 384. Residues isoleucine 385–phenylalanine 405 form a helical membrane-spanning segment. Topologically, residues lysine 406 to proline 413 are cytoplasmic. A PAL motif is present at residues proline 410–leucine 412. The segment at residues isoleucine 414–valine 434 is an intramembrane region (helical). Residues threonine 435–tyrosine 444 lie on the Cytoplasmic side of the membrane.

This sequence belongs to the peptidase A22A family. In terms of assembly, homodimer. Component of the gamma-secretase complex, a complex probably composed of the presenilin homodimer (sel-12, hop-1 or spe-4), nicastrin (aph-2), aph-1 and pen-2. Interacts with sel-10. As to expression, expressed in most neurons.

It is found in the endoplasmic reticulum membrane. The protein resides in the golgi apparatus membrane. Its function is as follows. Probable catalytic subunit of the gamma-secretase complex, an endoprotease complex that catalyzes the intramembrane cleavage of integral membrane proteins such as Notch receptors (lin-12 or glp-1). Provides the major presenilin function compared to hop-1 and spe-4. Required cell-autonomously for correct neurite connectivity of the AIY cholinergic interneurons and their correct functioning in thermotaxis. Required for mesodermal patterning of muscle function. Promotes basement membrane gap formation during tissue remodeling. This Caenorhabditis elegans protein is Presenilin sel-12.